The sequence spans 316 residues: Aspartate carbamoyltransferase catalytic subunit (316 aa).

Carbamoyl phosphate is bound by residues arginine 66 and threonine 67. Position 94 (lysine 94) interacts with L-aspartate. Residues arginine 116, histidine 146, and glutamine 149 each contribute to the carbamoyl phosphate site. The L-aspartate site is built by arginine 180 and arginine 235. Carbamoyl phosphate-binding residues include glycine 276 and proline 277.

Belongs to the aspartate/ornithine carbamoyltransferase superfamily. ATCase family. Heterododecamer (2C3:3R2) of six catalytic PyrB chains organized as two trimers (C3), and six regulatory PyrI chains organized as three dimers (R2).

The enzyme catalyses carbamoyl phosphate + L-aspartate = N-carbamoyl-L-aspartate + phosphate + H(+). Its pathway is pyrimidine metabolism; UMP biosynthesis via de novo pathway; (S)-dihydroorotate from bicarbonate: step 2/3. Its function is as follows. Catalyzes the condensation of carbamoyl phosphate and aspartate to form carbamoyl aspartate and inorganic phosphate, the committed step in the de novo pyrimidine nucleotide biosynthesis pathway. The sequence is that of Aspartate carbamoyltransferase catalytic subunit from Stenotrophomonas maltophilia (strain R551-3).